Consider the following 429-residue polypeptide: Tol-Pal system protein TolB (429 aa).

A signal peptide spans 1-21; the sequence is MKPVFKMLLSLLILWTSLLHA.

The protein belongs to the TolB family. As to quaternary structure, the Tol-Pal system is composed of five core proteins: the inner membrane proteins TolA, TolQ and TolR, the periplasmic protein TolB and the outer membrane protein Pal. They form a network linking the inner and outer membranes and the peptidoglycan layer.

It localises to the periplasm. Part of the Tol-Pal system, which plays a role in outer membrane invagination during cell division and is important for maintaining outer membrane integrity. TolB occupies a key intermediary position in the Tol-Pal system because it communicates directly with both membrane-embedded components, Pal in the outer membrane and TolA in the inner membrane. The sequence is that of Tol-Pal system protein TolB from Hamiltonella defensa subsp. Acyrthosiphon pisum (strain 5AT).